A 300-amino-acid polypeptide reads, in one-letter code: Centromere protein O (300 aa).

2 coiled-coil regions span residues Leu-18–Gln-42 and Asn-83–His-109. Ser-35 is modified (phosphoserine).

Belongs to the CENP-O/MCM21 family. Component of the CENPA-CAD complex, composed of CENPI, CENPK, CENPL, CENPO, CENPP, CENPQ, CENPR and CENPS. The CENPA-CAD complex interacts with the CENPA-NAC complex, at least composed of CENPA, CENPC, CENPH, CENPM, CENPN, CENPT and CENPU.

Its subcellular location is the nucleus. It localises to the chromosome. It is found in the centromere. The protein resides in the kinetochore. Functionally, component of the CENPA-CAD (nucleosome distal) complex, a complex recruited to centromeres which is involved in assembly of kinetochore proteins, mitotic progression and chromosome segregation. May be involved in incorporation of newly synthesized CENPA into centromeres via its interaction with the CENPA-NAC complex. Modulates the kinetochore-bound levels of NDC80 complex. This chain is Centromere protein O (CENPO), found in Homo sapiens (Human).